We begin with the raw amino-acid sequence, 325 residues long: tRNA(Ile)-lysidine synthase (325 aa).

Ser34–Ser39 lines the ATP pocket.

It belongs to the tRNA(Ile)-lysidine synthase family.

The protein localises to the cytoplasm. The enzyme catalyses cytidine(34) in tRNA(Ile2) + L-lysine + ATP = lysidine(34) in tRNA(Ile2) + AMP + diphosphate + H(+). Functionally, ligates lysine onto the cytidine present at position 34 of the AUA codon-specific tRNA(Ile) that contains the anticodon CAU, in an ATP-dependent manner. Cytidine is converted to lysidine, thus changing the amino acid specificity of the tRNA from methionine to isoleucine. This is tRNA(Ile)-lysidine synthase from Synechococcus sp. (strain ATCC 27144 / PCC 6301 / SAUG 1402/1) (Anacystis nidulans).